Reading from the N-terminus, the 95-residue chain is Protein TusB (95 aa).

This sequence belongs to the DsrH/TusB family. In terms of assembly, heterohexamer, formed by a dimer of trimers. The hexameric TusBCD complex contains 2 copies each of TusB, TusC and TusD. The TusBCD complex interacts with TusE.

It localises to the cytoplasm. Part of a sulfur-relay system required for 2-thiolation of 5-methylaminomethyl-2-thiouridine (mnm(5)s(2)U) at tRNA wobble positions. This is Protein TusB from Photorhabdus laumondii subsp. laumondii (strain DSM 15139 / CIP 105565 / TT01) (Photorhabdus luminescens subsp. laumondii).